The following is a 125-amino-acid chain: Small ribosomal subunit protein bS6 (125 aa).

Residues 99–125 form a disordered region; that stretch reads ASPMVKAREERKPLTEVENNDFEDAEE. Positions 104 to 113 are enriched in basic and acidic residues; it reads KAREERKPLT. Acidic residues predominate over residues 116–125; the sequence is ENNDFEDAEE.

The protein belongs to the bacterial ribosomal protein bS6 family.

Binds together with bS18 to 16S ribosomal RNA. The chain is Small ribosomal subunit protein bS6 from Histophilus somni (strain 2336) (Haemophilus somnus).